We begin with the raw amino-acid sequence, 265 residues long: ClpXP adapter protein SpxH (265 aa).

The protein belongs to the SpxH family. As to quaternary structure, interacts with Spx.

Its subcellular location is the cytoplasm. Its function is as follows. Adapter protein required for efficient degradation of Spx by ClpXP under non-stress conditions. Interaction with Spx stabilizes Spx and exposes the C-terminus of Spx for recognition and proteolysis by ClpXP. This is ClpXP adapter protein SpxH from Staphylococcus haemolyticus (strain JCSC1435).